Consider the following 104-residue polypeptide: NADH-ubiquinone oxidoreductase 12 kDa subunit, mitochondrial (104 aa).

It belongs to the complex I NDUFS6 subunit family. In terms of assembly, complex I is composed of about 40 different subunits.

It is found in the mitochondrion inner membrane. In terms of biological role, accessory subunit of the mitochondrial membrane respiratory chain NADH dehydrogenase (Complex I), that is believed not to be involved in catalysis. Complex I functions in the transfer of electrons from NADH to the respiratory chain. The immediate electron acceptor for the enzyme is believed to be ubiquinone. The polypeptide is NADH-ubiquinone oxidoreductase 12 kDa subunit, mitochondrial (nuo-12.3) (Neurospora crassa (strain ATCC 24698 / 74-OR23-1A / CBS 708.71 / DSM 1257 / FGSC 987)).